The sequence spans 141 residues: Glutathione transferase FosA (141 aa).

Residues 4–117 form the VOC domain; that stretch reads SLNHLTLAVS…DGHKLELHVG (114 aa). Mn(2+) contacts are provided by histidine 7, histidine 67, and glutamate 113.

This sequence belongs to the fosfomycin resistance protein family. In terms of assembly, homodimer. The cofactor is Mn(2+).

It localises to the cytoplasm. The enzyme catalyses RX + glutathione = an S-substituted glutathione + a halide anion + H(+). With respect to regulation, requires the monovalent cation K(+) for optimal activity. Functionally, metalloglutathione transferase which confers resistance to fosfomycin by catalyzing the addition of glutathione to fosfomycin. The protein is Glutathione transferase FosA (fosA) of Serratia marcescens.